The chain runs to 52 residues: Large ribosomal subunit protein bL32c (52 aa).

This sequence belongs to the bacterial ribosomal protein bL32 family.

The protein localises to the plastid. It localises to the chloroplast. The protein is Large ribosomal subunit protein bL32c of Nymphaea alba (White water-lily).